Reading from the N-terminus, the 273-residue chain is 5-deoxy-glucuronate isomerase (273 aa).

It belongs to the isomerase IolB family.

The catalysed reaction is 5-deoxy-D-glucuronate = 5-dehydro-2-deoxy-D-gluconate. Its pathway is polyol metabolism; myo-inositol degradation into acetyl-CoA; acetyl-CoA from myo-inositol: step 4/7. In terms of biological role, involved in the isomerization of 5-deoxy-glucuronate (5DG) to 5-dehydro-2-deoxy-D-gluconate (DKG or 2-deoxy-5-keto-D-gluconate). The chain is 5-deoxy-glucuronate isomerase from Listeria monocytogenes serovar 1/2a (strain ATCC BAA-679 / EGD-e).